The primary structure comprises 20 residues: Unknown protein NF015 from 2D-PAGE (20 aa).

Residues 1–20 (TPQIQKPAPQFSKTALLPDE) form a disordered region.

This is Unknown protein NF015 from 2D-PAGE from Naegleria fowleri (Brain eating amoeba).